We begin with the raw amino-acid sequence, 177 residues long: Inner membrane protein p22 (177 aa).

Residues 1-7 (MFNIKMT) lie on the Intravirion side of the membrane. The chain crosses the membrane as a helical span at residues 8–28 (ISVLLIALIVLLIIILVVFLY). The Virion surface portion of the chain corresponds to 29-177 (YKKQQPPKKV…IALPRNHKHA (149 aa)).

This sequence belongs to the asfivirus inner membrane protein p22 family.

The protein resides in the virion membrane. It localises to the host cell membrane. This is Inner membrane protein p22 from African swine fever virus (isolate Warthog/Namibia/Wart80/1980) (ASFV).